The primary structure comprises 426 residues: 3-phosphoshikimate 1-carboxyvinyltransferase (426 aa).

Residues lysine 22, serine 23, and arginine 27 each contribute to the 3-phosphoshikimate site. Residue lysine 22 coordinates phosphoenolpyruvate. Residues glycine 96 and arginine 124 each coordinate phosphoenolpyruvate. Serine 170, serine 171, glutamine 172, serine 198, aspartate 314, asparagine 337, and lysine 341 together coordinate 3-phosphoshikimate. A phosphoenolpyruvate-binding site is contributed by glutamine 172. Aspartate 314 acts as the Proton acceptor in catalysis. The phosphoenolpyruvate site is built by arginine 345, arginine 387, and lysine 412.

This sequence belongs to the EPSP synthase family. In terms of assembly, monomer.

The protein resides in the cytoplasm. It carries out the reaction 3-phosphoshikimate + phosphoenolpyruvate = 5-O-(1-carboxyvinyl)-3-phosphoshikimate + phosphate. It participates in metabolic intermediate biosynthesis; chorismate biosynthesis; chorismate from D-erythrose 4-phosphate and phosphoenolpyruvate: step 6/7. Catalyzes the transfer of the enolpyruvyl moiety of phosphoenolpyruvate (PEP) to the 5-hydroxyl of shikimate-3-phosphate (S3P) to produce enolpyruvyl shikimate-3-phosphate and inorganic phosphate. The protein is 3-phosphoshikimate 1-carboxyvinyltransferase of Colwellia psychrerythraea (strain 34H / ATCC BAA-681) (Vibrio psychroerythus).